The sequence spans 240 residues: Methylthioribulose-1-phosphate dehydratase (240 aa).

Substrate is bound at residue Cys99. Zn(2+)-binding residues include His116 and His118. Catalysis depends on Glu145, which acts as the Proton donor/acceptor. His201 is a binding site for Zn(2+).

This sequence belongs to the aldolase class II family. MtnB subfamily. Zn(2+) serves as cofactor.

Its subcellular location is the cytoplasm. The catalysed reaction is 5-(methylsulfanyl)-D-ribulose 1-phosphate = 5-methylsulfanyl-2,3-dioxopentyl phosphate + H2O. Its pathway is amino-acid biosynthesis; L-methionine biosynthesis via salvage pathway; L-methionine from S-methyl-5-thio-alpha-D-ribose 1-phosphate: step 2/6. Functionally, catalyzes the dehydration of methylthioribulose-1-phosphate (MTRu-1-P) into 2,3-diketo-5-methylthiopentyl-1-phosphate (DK-MTP-1-P). This chain is Methylthioribulose-1-phosphate dehydratase, found in Ajellomyces capsulatus (strain G186AR / H82 / ATCC MYA-2454 / RMSCC 2432) (Darling's disease fungus).